The primary structure comprises 472 residues: UDP-N-acetylmuramate--L-alanine ligase (472 aa).

118 to 124 provides a ligand contact to ATP; it reads GTHGKTT.

It belongs to the MurCDEF family.

The protein localises to the cytoplasm. It catalyses the reaction UDP-N-acetyl-alpha-D-muramate + L-alanine + ATP = UDP-N-acetyl-alpha-D-muramoyl-L-alanine + ADP + phosphate + H(+). The protein operates within cell wall biogenesis; peptidoglycan biosynthesis. In terms of biological role, cell wall formation. The chain is UDP-N-acetylmuramate--L-alanine ligase from Methylococcus capsulatus (strain ATCC 33009 / NCIMB 11132 / Bath).